The chain runs to 396 residues: Acetate kinase (396 aa).

Asn7 contributes to the Mg(2+) binding site. Lys14 serves as a coordination point for ATP. Substrate is bound at residue Arg88. Asp145 acts as the Proton donor/acceptor in catalysis. ATP contacts are provided by residues 205-209, 279-281, and 327-331; these read HLGNG, DFR, and GIGEN. Residue Glu381 coordinates Mg(2+).

It belongs to the acetokinase family. Homodimer. It depends on Mg(2+) as a cofactor. Mn(2+) is required as a cofactor.

The protein localises to the cytoplasm. It carries out the reaction acetate + ATP = acetyl phosphate + ADP. The protein operates within metabolic intermediate biosynthesis; acetyl-CoA biosynthesis; acetyl-CoA from acetate: step 1/2. In terms of biological role, catalyzes the formation of acetyl phosphate from acetate and ATP. Can also catalyze the reverse reaction. The sequence is that of Acetate kinase from Campylobacter jejuni (strain RM1221).